Here is a 252-residue protein sequence, read N- to C-terminus: 3-dehydroquinate dehydratase (252 aa).

Residues Ser21, 46 to 48, and Arg82 contribute to the 3-dehydroquinate site; that span reads EWR. Catalysis depends on His143, which acts as the Proton donor/acceptor. Lys170 functions as the Schiff-base intermediate with substrate in the catalytic mechanism. Positions 213, 232, and 236 each coordinate 3-dehydroquinate.

The protein belongs to the type-I 3-dehydroquinase family. Homodimer.

It catalyses the reaction 3-dehydroquinate = 3-dehydroshikimate + H2O. It functions in the pathway metabolic intermediate biosynthesis; chorismate biosynthesis; chorismate from D-erythrose 4-phosphate and phosphoenolpyruvate: step 3/7. Its function is as follows. Involved in the third step of the chorismate pathway, which leads to the biosynthesis of aromatic amino acids. Catalyzes the cis-dehydration of 3-dehydroquinate (DHQ) and introduces the first double bond of the aromatic ring to yield 3-dehydroshikimate. This Escherichia coli O157:H7 protein is 3-dehydroquinate dehydratase.